Consider the following 105-residue polypeptide: Phosphoribosyl-ATP pyrophosphatase (105 aa).

This sequence belongs to the PRA-PH family.

It localises to the cytoplasm. The catalysed reaction is 1-(5-phospho-beta-D-ribosyl)-ATP + H2O = 1-(5-phospho-beta-D-ribosyl)-5'-AMP + diphosphate + H(+). It participates in amino-acid biosynthesis; L-histidine biosynthesis; L-histidine from 5-phospho-alpha-D-ribose 1-diphosphate: step 2/9. This Methylococcus capsulatus (strain ATCC 33009 / NCIMB 11132 / Bath) protein is Phosphoribosyl-ATP pyrophosphatase.